Consider the following 250-residue polypeptide: Cell division protein ZapD (250 aa).

It belongs to the ZapD family. As to quaternary structure, interacts with FtsZ.

The protein localises to the cytoplasm. Its function is as follows. Cell division factor that enhances FtsZ-ring assembly. Directly interacts with FtsZ and promotes bundling of FtsZ protofilaments, with a reduction in FtsZ GTPase activity. This Yersinia pseudotuberculosis serotype O:1b (strain IP 31758) protein is Cell division protein ZapD.